Consider the following 95-residue polypeptide: Protein Vpr (95 aa).

Residues 1–42 (MERAPEDAGPQREPYNEWALELLEELKNEAVRHFPRIWLHGL) form a homooligomerization region. Phosphoserine; by host occurs at positions 79, 93, and 95.

Belongs to the HIV-1 VPR protein family. As to quaternary structure, homooligomer, may form homodimer. Interacts with p6-gag region of the Pr55 Gag precursor protein through a (Leu-X-X)4 motif near the C-terminus of the P6gag protein. Interacts with host UNG. May interact with host RAD23A/HHR23A. Interacts with host VPRBP/DCAF1, leading to hijack the CUL4A-RBX1-DDB1-DCAF1/VPRBP complex, mediating ubiquitination of host proteins such as TERT and ZGPAT and arrest of the cell cycle in G2 phase. Phosphorylated on several residues by host. These phosphorylations regulate VPR activity for the nuclear import of the HIV-1 pre-integration complex.

It localises to the virion. It is found in the host nucleus. The protein localises to the host extracellular space. During virus replication, may deplete host UNG protein, and incude G2-M cell cycle arrest. Acts by targeting specific host proteins for degradation by the 26S proteasome, through association with the cellular CUL4A-DDB1 E3 ligase complex by direct interaction with host VPRPB/DCAF-1. Cell cycle arrest reportedly occurs within hours of infection and is not blocked by antiviral agents, suggesting that it is initiated by the VPR carried into the virion. Additionally, VPR induces apoptosis in a cell cycle dependent manner suggesting that these two effects are mechanistically linked. Detected in the serum and cerebrospinal fluid of AIDS patient, VPR may also induce cell death to bystander cells. Its function is as follows. During virus entry, plays a role in the transport of the viral pre-integration (PIC) complex to the host nucleus. This function is crucial for viral infection of non-dividing macrophages. May act directly at the nuclear pore complex, by binding nucleoporins phenylalanine-glycine (FG)-repeat regions. This chain is Protein Vpr, found in Homo sapiens (Human).